An 889-amino-acid chain; its full sequence is DNA mismatch repair protein MutS (889 aa).

Position 622-629 (622-629 (GPNMAGKS)) interacts with ATP. The tract at residues 869–889 (QRVKRPEKAPADVTAETEDQE) is disordered.

It belongs to the DNA mismatch repair MutS family.

Functionally, this protein is involved in the repair of mismatches in DNA. It is possible that it carries out the mismatch recognition step. This protein has a weak ATPase activity. This is DNA mismatch repair protein MutS from Desulfatibacillum aliphaticivorans.